Here is a 39-residue protein sequence, read N- to C-terminus: Cytochrome b559 subunit beta (39 aa).

The chain crosses the membrane as a helical span at residues 14–30 (WLAVHGLAVPTVFFLGA). Heme is bound at residue His18.

It belongs to the PsbE/PsbF family. As to quaternary structure, heterodimer of an alpha subunit and a beta subunit. PSII is composed of 1 copy each of membrane proteins PsbA, PsbB, PsbC, PsbD, PsbE, PsbF, PsbH, PsbI, PsbJ, PsbK, PsbL, PsbM, PsbT, PsbX, PsbY, PsbZ, Psb30/Ycf12, at least 3 peripheral proteins of the oxygen-evolving complex and a large number of cofactors. It forms dimeric complexes. Requires heme b as cofactor.

It is found in the plastid. The protein localises to the chloroplast thylakoid membrane. Functionally, this b-type cytochrome is tightly associated with the reaction center of photosystem II (PSII). PSII is a light-driven water:plastoquinone oxidoreductase that uses light energy to abstract electrons from H(2)O, generating O(2) and a proton gradient subsequently used for ATP formation. It consists of a core antenna complex that captures photons, and an electron transfer chain that converts photonic excitation into a charge separation. The polypeptide is Cytochrome b559 subunit beta (Physcomitrium patens (Spreading-leaved earth moss)).